Reading from the N-terminus, the 376-residue chain is Erythronate-4-phosphate dehydrogenase (376 aa).

S45 and T66 together coordinate substrate. Residues 126 to 127, D146, T174, 201 to 203, and D227 contribute to the NAD(+) site; these read QV and ASR. Residue R203 is part of the active site. Residue E232 is part of the active site. H249 (proton donor) is an active-site residue. G252 lines the NAD(+) pocket. Residue Y253 participates in substrate binding.

The protein belongs to the D-isomer specific 2-hydroxyacid dehydrogenase family. PdxB subfamily. As to quaternary structure, homodimer.

It is found in the cytoplasm. It catalyses the reaction 4-phospho-D-erythronate + NAD(+) = (R)-3-hydroxy-2-oxo-4-phosphooxybutanoate + NADH + H(+). The protein operates within cofactor biosynthesis; pyridoxine 5'-phosphate biosynthesis; pyridoxine 5'-phosphate from D-erythrose 4-phosphate: step 2/5. Functionally, catalyzes the oxidation of erythronate-4-phosphate to 3-hydroxy-2-oxo-4-phosphonooxybutanoate. This chain is Erythronate-4-phosphate dehydrogenase, found in Ectopseudomonas mendocina (strain ymp) (Pseudomonas mendocina).